The sequence spans 509 residues: DNA nucleotidylexotransferase (509 aa).

The tract at residues 1–25 (MDPLCTASSGPRKKRPRQVGASMAS) is disordered. The Nuclear localization signal signature appears at 11–17 (PRKKRPR). Residues 27 to 124 (PHDIKFQNLV…KPVEITGKHQ (98 aa)) form the BRCT domain. Positions 151–509 (SQYACQRKTT…DYIEPWERNA (359 aa)) are mediates interaction with DNTTIP2. An involved in DNA binding region spans residues 258-262 (VGLKT). A 2'-deoxyribonucleoside 5'-triphosphate is bound by residues 333–338 (GFRRGK) and 342–345 (HDVD). The Mg(2+) site is built by Asp343, Asp345, and Asp433. An a 2'-deoxyribonucleoside 5'-triphosphate-binding site is contributed by 448–449 (GW).

Belongs to the DNA polymerase type-X family. In terms of assembly, interacts with PRP19 and DNTTIP1. Forms a ternary complex with DNTTIP2 and core histone. Released from this complex by PCNA. Interacts with TRERF1. It depends on Mg(2+) as a cofactor.

Its subcellular location is the nucleus. The enzyme catalyses DNA(n) + a 2'-deoxyribonucleoside 5'-triphosphate = DNA(n+1) + diphosphate. Its function is as follows. Template-independent DNA polymerase which catalyzes the random addition of deoxynucleoside 5'-triphosphate to the 3'-end of a DNA initiator. One of the in vivo functions of this enzyme is the addition of nucleotides at the junction (N region) of rearranged Ig heavy chain and T-cell receptor gene segments during the maturation of B- and T-cells. In Bos taurus (Bovine), this protein is DNA nucleotidylexotransferase (DNTT).